Reading from the N-terminus, the 123-residue chain is Large ribosomal subunit protein bL20 (123 aa).

It belongs to the bacterial ribosomal protein bL20 family.

Functionally, binds directly to 23S ribosomal RNA and is necessary for the in vitro assembly process of the 50S ribosomal subunit. It is not involved in the protein synthesizing functions of that subunit. This is Large ribosomal subunit protein bL20 (rplT) from Chlamydia muridarum (strain MoPn / Nigg).